The chain runs to 163 residues: Putative pre-16S rRNA nuclease (163 aa).

It belongs to the YqgF nuclease family.

Its subcellular location is the cytoplasm. Functionally, could be a nuclease involved in processing of the 5'-end of pre-16S rRNA. The chain is Putative pre-16S rRNA nuclease from Chlamydia caviae (strain ATCC VR-813 / DSM 19441 / 03DC25 / GPIC) (Chlamydophila caviae).